The following is a 322-amino-acid chain: Lipoyl synthase 2 (322 aa).

Positions 1-36 (MKVILDLLNNDPRTTQRTERPRHPEKANRPDTPMES) are disordered. Residues 14–34 (TTQRTERPRHPEKANRPDTPM) are compositionally biased toward basic and acidic residues. [4Fe-4S] cluster contacts are provided by C67, C72, C78, C93, C97, C100, and S306. A Radical SAM core domain is found at 79-295 (WAKKHATFMI…EKTAYAKGFL (217 aa)).

Belongs to the radical SAM superfamily. Lipoyl synthase family. [4Fe-4S] cluster serves as cofactor.

The protein localises to the cytoplasm. It catalyses the reaction [[Fe-S] cluster scaffold protein carrying a second [4Fe-4S](2+) cluster] + N(6)-octanoyl-L-lysyl-[protein] + 2 oxidized [2Fe-2S]-[ferredoxin] + 2 S-adenosyl-L-methionine + 4 H(+) = [[Fe-S] cluster scaffold protein] + N(6)-[(R)-dihydrolipoyl]-L-lysyl-[protein] + 4 Fe(3+) + 2 hydrogen sulfide + 2 5'-deoxyadenosine + 2 L-methionine + 2 reduced [2Fe-2S]-[ferredoxin]. It participates in protein modification; protein lipoylation via endogenous pathway; protein N(6)-(lipoyl)lysine from octanoyl-[acyl-carrier-protein]: step 2/2. Its function is as follows. Catalyzes the radical-mediated insertion of two sulfur atoms into the C-6 and C-8 positions of the octanoyl moiety bound to the lipoyl domains of lipoate-dependent enzymes, thereby converting the octanoylated domains into lipoylated derivatives. This is Lipoyl synthase 2 from Bradyrhizobium diazoefficiens (strain JCM 10833 / BCRC 13528 / IAM 13628 / NBRC 14792 / USDA 110).